A 384-amino-acid chain; its full sequence is Protein cutoff (384 aa).

Belongs to the DXO/Dom3Z family. As to quaternary structure, component of the Rhino-Deadlock-Cutoff (RDC) complex, composed of rhi/rhino, del/deadlock and cuff/cutoff. Interacts with rhi/rhino; this interaction is indirect and is mediated by del/deadlock. Interacts with del/deadlock (via C-terminal); this interaction is direct. Interacts with Rat1.

The protein resides in the cytoplasm. The protein localises to the nucleus. It localises to the chromosome. Involved in the piRNA pathway in germline tissues. Part of the Rhino-Deadlock-Cutoff (RDC) complex that stimulates piRNA biogenesis from chromatin regions corresponding to dual-strand, but not single-stranded, piRNA clusters. Promotes transcription of long piRNA precursors by preventing termination at canonical poly(A) sites. As part of the RDC complex, is recruited to chromatin enriched in histone modification H3K9me3 and might contribute to complex interaction by binding nascent transcript nucleic acid chains. Associates with chromatin upon exposure to homologous piRNA. Suppresses cleavage at canonical poly(A) sites by blocking recruitment of the cleavage and polyadenylation specificity factor (CPSF) complex and prevents transcriptional termination by RNA polymerase II, facilitating transcriptional read-through. As part of the RDC complex, involved in suppression of splicing. Catalytically inactive, lacking 5'-3' exonuclease and pyrophosphohydrolase activities. Stabilizes uncapped piRNA precursors in the nucleus, probably by sequestering or blocking the exonuclease activity of Rat1. May also be involved in siRNA biogenesis from dual-strand piRNA clusters. This chain is Protein cutoff (cuff), found in Drosophila melanogaster (Fruit fly).